Here is a 460-residue protein sequence, read N- to C-terminus: MKRADLAGRKVSVIGAGRSGNAAVELLLCHGARVLLSEKGALDPDTALRFRQRGAEVESEGHSDRVFDADFAVVSPGVPPGVPVIRELERRQIPVHSEIELASWFCRARIAGITGTDGKTTTATLVQRMAEAVGRLGGYRAYGVGNIGVPFSSKVEEMEERDIAVVELSSYQLERCSSFRPEAALITNITPDHLDRYGGDIMRYADAKYRIAMNLGSSGTLVYNADDPILRARFSVGGLQFSTVPFSTAGPVGGDPSSGIYLEDGWVHAGLRRLIHTSEFQKGSFRGNHNNSNVLGAIGLARALRLDEKAVLQALREFPGVEHRQEFVASKRGSDWINDSKATNVNAMRQALEAVPGRIVLIAGGRDKGNDYSAVATLVREKADLVVAMGESRQKVADAFRADVAVVEAATLEDAVRLAAGGAGTGRTVLFSPGCASFDLFRDFEDRGRSFKAEVGRLEA.

Residue Gly-115–Thr-121 coordinates ATP.

This sequence belongs to the MurCDEF family.

Its subcellular location is the cytoplasm. The enzyme catalyses UDP-N-acetyl-alpha-D-muramoyl-L-alanine + D-glutamate + ATP = UDP-N-acetyl-alpha-D-muramoyl-L-alanyl-D-glutamate + ADP + phosphate + H(+). It functions in the pathway cell wall biogenesis; peptidoglycan biosynthesis. In terms of biological role, cell wall formation. Catalyzes the addition of glutamate to the nucleotide precursor UDP-N-acetylmuramoyl-L-alanine (UMA). This is UDP-N-acetylmuramoylalanine--D-glutamate ligase from Chlorobium luteolum (strain DSM 273 / BCRC 81028 / 2530) (Pelodictyon luteolum).